We begin with the raw amino-acid sequence, 176 residues long: Large ribosomal subunit protein uL6 (176 aa).

It belongs to the universal ribosomal protein uL6 family. As to quaternary structure, part of the 50S ribosomal subunit.

Its function is as follows. This protein binds to the 23S rRNA, and is important in its secondary structure. It is located near the subunit interface in the base of the L7/L12 stalk, and near the tRNA binding site of the peptidyltransferase center. The chain is Large ribosomal subunit protein uL6 from Lactobacillus acidophilus (strain ATCC 700396 / NCK56 / N2 / NCFM).